We begin with the raw amino-acid sequence, 132 residues long: Small ribosomal subunit protein uS11 (132 aa).

The protein belongs to the universal ribosomal protein uS11 family. In terms of assembly, part of the 30S ribosomal subunit.

In terms of biological role, located on the platform of the 30S subunit. This Caldivirga maquilingensis (strain ATCC 700844 / DSM 13496 / JCM 10307 / IC-167) protein is Small ribosomal subunit protein uS11.